We begin with the raw amino-acid sequence, 179 residues long: Ribosome-recycling factor (179 aa).

It belongs to the RRF family.

The protein localises to the cytoplasm. In terms of biological role, responsible for the release of ribosomes from messenger RNA at the termination of protein biosynthesis. May increase the efficiency of translation by recycling ribosomes from one round of translation to another. The chain is Ribosome-recycling factor from Chlamydia trachomatis serovar L2b (strain UCH-1/proctitis).